A 750-amino-acid chain; its full sequence is Protein O-mannosyl-transferase 2 (750 aa).

The tract at residues Met-1 to Pro-23 is disordered. Ser-41 carries the phosphoserine modification. The chain crosses the membrane as a helical span at residues Ala-54–His-74. Asn-98 carries an N-linked (GlcNAc...) asparagine glycan. The next 5 helical transmembrane spans lie at Thr-100–Leu-120, Gly-146–Leu-166, Gln-191–Val-211, Leu-231–Leu-251, and Val-283–Met-303. Residue Asn-330 is glycosylated (N-linked (GlcNAc...) asparagine). MIR domains follow at residues Pro-334–His-390, Val-403–Val-459, and Gly-464–His-521. Asn-445 carries N-linked (GlcNAc...) asparagine glycosylation. N-linked (GlcNAc...) asparagine glycosylation is found at Asn-528 and Asn-583. A run of 4 helical transmembrane segments spans residues Val-596 to Ala-616, Val-643 to Phe-663, His-665 to Leu-685, and Gly-700 to Phe-720.

The protein belongs to the glycosyltransferase 39 family. As to quaternary structure, interacts with POMT1. Post-translationally, N-glycosylated. In terms of tissue distribution, highly expressed in testis; detected at low levels in most tissues.

It is found in the endoplasmic reticulum membrane. The enzyme catalyses a di-trans,poly-cis-dolichyl beta-D-mannosyl phosphate + L-seryl-[protein] = 3-O-(alpha-D-mannosyl)-L-seryl-[protein] + a di-trans,poly-cis-dolichyl phosphate + H(+). It carries out the reaction a di-trans,poly-cis-dolichyl beta-D-mannosyl phosphate + L-threonyl-[protein] = 3-O-(alpha-D-mannosyl)-L-threonyl-[protein] + a di-trans,poly-cis-dolichyl phosphate + H(+). The protein operates within protein modification; protein glycosylation. With respect to regulation, slightly activated by Mg(2+) and inhibited by both Ca(+) and Mn(2+). EDTA ha no effect on activity in vitro. Functionally, transfers mannosyl residues to the hydroxyl group of serine or threonine residues. Coexpression of both POMT1 and POMT2 is necessary for enzyme activity, expression of either POMT1 or POMT2 alone is insufficient. Essentially dedicated to O-mannosylation of alpha-DAG1 and few other proteins but not of cadherins and protocaherins. The polypeptide is Protein O-mannosyl-transferase 2 (POMT2) (Homo sapiens (Human)).